The sequence spans 151 residues: HTH-type transcriptional regulator TcaR (151 aa).

The HTH marR-type domain occupies 1-142 (MVKHLQDHIQ…VRQVLEVINH (142 aa)). The segment at residues 54–77 (ISEITQRQGVNKAAVSRRIKKLID) is a DNA-binding region (H-T-H motif).

Functionally, involved in the antibiotic teicoplanin susceptibility. Inactivation of the tcaRAB operon leads to teicoplanin resistance. In terms of biological role, is a weak negative regulator of transcription of the icaABD operon. This Staphylococcus aureus (strain COL) protein is HTH-type transcriptional regulator TcaR (tcaR).